A 187-amino-acid polypeptide reads, in one-letter code: Putative zinc finger protein 833 (187 aa).

6 consecutive C2H2-type zinc fingers follow at residues 10-32 (YKCK…ERTH), 38-60 (YECN…ARIH), 66-88 (YICK…ENTH), 94-116 (CECK…ERIH), 122-144 (YKCK…KSTH), and 150-172 (YECK…EGVH).

The polypeptide is Putative zinc finger protein 833 (ZNF833P) (Homo sapiens (Human)).